The sequence spans 468 residues: Alcohol dehydrogenase (quinone), cytochrome c subunit (468 aa).

A signal peptide spans 1-23 (MINRLKVTFSAAAFSLLAGTALA). Cytochrome c domains lie at 31-134 (ALVQ…MHGV), 178-293 (PEIA…KSLP), and 317-407 (TASV…RTSW). Residues cysteine 45, cysteine 48, histidine 49, cysteine 193, cysteine 196, histidine 197, cysteine 330, cysteine 333, and histidine 334 each contribute to the heme c site.

In terms of assembly, the alcohol dehydrogenase multicomponent enzyme system is composed of a dehydrogenase subunit I (AdhA) and a cytochrome c subunit II (AdhB). Requires heme c as cofactor.

The protein resides in the cell membrane. The catalysed reaction is ethanol + a ubiquinone = a ubiquinol + acetaldehyde. Its function is as follows. Cytochrome c component of the alcohol dehydrogenase multicomponent enzyme system which is involved in the production of acetic acid and in the ethanol oxidase respiratory chain. Quinohemoprotein alcohol dehydrogenase (ADH) catalyzes the oxidation of ethanol to acetaldehyde by transferring electrons to the ubiquinone embedded in the membrane phospholipids. The electrons transfer from ethanol to membranous ubiquinone occurs from pyrroloquinoline quinone (PQQ) to one heme c in subunit I (AdhA), and finally to two heme c in subunit II (AdhB). Besides ubiquinone reduction, ADH also has a ubiquinol (QH2) oxidation reaction which mediates electron transfer from ubiquinol to the non-energy generating bypass oxidase system. The electrons transfer occurs from ubiquinol (QH2) to the additional heme c within subunit II (AdhB). The sequence is that of Alcohol dehydrogenase (quinone), cytochrome c subunit from Gluconacetobacter polyoxogenes (Acetobacter polyoxogenes).